Consider the following 304-residue polypeptide: MSYRGLTILGCSSQQPTRHRNHGAYLLRWNGEGLLFDPGEGTQRQFIYANIAPTVVSRIFISHFHGDHCLGLGSMLMRLNLDRVLHPIHCYYPASGKKYFDRLRYSTIYHETIKVIEHPIDREGIVEDFGNFRIESRQLDHLVDTLGWRITEPDTTKFIPEKIKAAGLKGPIMQELINKGQVKVNDTIVHLDDVSYTRKGDSIAVVADSLPCQAIVDLARNARILLCESTYLEEHSHLAKSHYHMTAKQAAEQAKRAEVQQLILTHFSARYNTTEEFVQEAGEIFPNVFAAEEFCSYEFPKNPS.

Zn(2+) is bound by residues H63, H65, D67, H68, H141, D208, and H266. D67 serves as the catalytic Proton acceptor.

Belongs to the RNase Z family. In terms of assembly, homodimer. It depends on Zn(2+) as a cofactor.

It carries out the reaction Endonucleolytic cleavage of RNA, removing extra 3' nucleotides from tRNA precursor, generating 3' termini of tRNAs. A 3'-hydroxy group is left at the tRNA terminus and a 5'-phosphoryl group is left at the trailer molecule.. Zinc phosphodiesterase, which displays some tRNA 3'-processing endonuclease activity. Probably involved in tRNA maturation, by removing a 3'-trailer from precursor tRNA. This is Ribonuclease Z from Chlamydia trachomatis serovar D (strain ATCC VR-885 / DSM 19411 / UW-3/Cx).